A 215-amino-acid chain; its full sequence is Cytochrome b6 (215 aa).

A helical transmembrane segment spans residues 32–52 (IFYCLGGITLTCFLVQIATGF). Position 35 (Cys-35) interacts with heme c. Heme b is bound by residues His-86 and His-100. Helical transmembrane passes span 90 to 110 (ASMM…TGGF), 116 to 136 (LTWV…VTGY), and 186 to 206 (LHTF…FLMI). Heme b-binding residues include His-187 and His-202.

The protein belongs to the cytochrome b family. PetB subfamily. In terms of assembly, the 4 large subunits of the cytochrome b6-f complex are cytochrome b6, subunit IV (17 kDa polypeptide, PetD), cytochrome f and the Rieske protein, while the 4 small subunits are PetG, PetL, PetM and PetN. The complex functions as a dimer. It depends on heme b as a cofactor. Heme c is required as a cofactor.

The protein localises to the plastid. The protein resides in the chloroplast thylakoid membrane. Component of the cytochrome b6-f complex, which mediates electron transfer between photosystem II (PSII) and photosystem I (PSI), cyclic electron flow around PSI, and state transitions. This chain is Cytochrome b6, found in Adiantum capillus-veneris (Maidenhair fern).